Consider the following 204-residue polypeptide: Large ribosomal subunit protein bL25 (204 aa).

A disordered region spans residues 1-23 (MSETLHLSAETRDRAGKGASRAL).

This sequence belongs to the bacterial ribosomal protein bL25 family. CTC subfamily. Part of the 50S ribosomal subunit; part of the 5S rRNA/L5/L18/L25 subcomplex. Contacts the 5S rRNA. Binds to the 5S rRNA independently of L5 and L18.

Functionally, this is one of the proteins that binds to the 5S RNA in the ribosome where it forms part of the central protuberance. The sequence is that of Large ribosomal subunit protein bL25 from Novosphingobium aromaticivorans (strain ATCC 700278 / DSM 12444 / CCUG 56034 / CIP 105152 / NBRC 16084 / F199).